Reading from the N-terminus, the 194-residue chain is Bis(5'-nucleosyl)-tetraphosphatase, symmetrical (194 aa).

In terms of domain architecture, HD spans 18 to 132; that stretch reads RYNHSLRVAE…IFIADYIEPG (115 aa). An ADP-binding site is contributed by histidine 21. Fe cation is bound by residues histidine 21, histidine 50, and aspartate 51. Residues 51–54, histidine 83, 109–110, aspartate 127, arginine 133, and 172–177 contribute to the ADP site; these read DFCK, HT, and TVYNKT. Aspartate 127 contacts Fe cation.

It belongs to the Ap4A hydrolase YqeK family. Homodimer.

The catalysed reaction is P(1),P(4)-bis(5'-adenosyl) tetraphosphate + H2O = 2 ADP + 2 H(+). With respect to regulation, inhibited by EDTA. Its function is as follows. Hydrolyzes diadenosine 5',5'''-P1,P4-tetraphosphate (Ap4A) to yield ADP. Can also hydrolyze Ap3A, Ap5A, Ap4G, Ap4U and Gp4G, always releasing ADP or GDP as one of the products, but it exhibits a marked preference for Ap4A, which is mainly exerted at the substrate affinity level. The polypeptide is Bis(5'-nucleosyl)-tetraphosphatase, symmetrical (Staphylococcus aureus (strain NCTC 8325 / PS 47)).